The following is a 364-amino-acid chain: 3-isopropylmalate dehydrogenase (364 aa).

76-89 provides a ligand contact to NAD(+); that stretch reads GPKWEKLPPNEQPE. Residues arginine 97, arginine 107, arginine 136, and aspartate 225 each coordinate substrate. The Mg(2+) site is built by aspartate 225, aspartate 249, and aspartate 253. NAD(+) is bound at residue 283-295; sequence GSAPDIAGKGIAN.

This sequence belongs to the isocitrate and isopropylmalate dehydrogenases family. LeuB type 1 subfamily. Homodimer. Mg(2+) serves as cofactor. Requires Mn(2+) as cofactor.

The protein localises to the cytoplasm. It catalyses the reaction (2R,3S)-3-isopropylmalate + NAD(+) = 4-methyl-2-oxopentanoate + CO2 + NADH. It participates in amino-acid biosynthesis; L-leucine biosynthesis; L-leucine from 3-methyl-2-oxobutanoate: step 3/4. In terms of biological role, catalyzes the oxidation of 3-carboxy-2-hydroxy-4-methylpentanoate (3-isopropylmalate) to 3-carboxy-4-methyl-2-oxopentanoate. The product decarboxylates to 4-methyl-2 oxopentanoate. In Shewanella oneidensis (strain ATCC 700550 / JCM 31522 / CIP 106686 / LMG 19005 / NCIMB 14063 / MR-1), this protein is 3-isopropylmalate dehydrogenase.